Here is a 386-residue protein sequence, read N- to C-terminus: tRNA N6-adenosine threonylcarbamoyltransferase (386 aa).

H141, H145, and Y162 together coordinate a divalent metal cation. Residues 162-166 (YVSGG), D194, G209, E213, and N315 contribute to the substrate site. Residue D344 participates in a divalent metal cation binding.

This sequence belongs to the KAE1 / TsaD family. Component of the EKC/KEOPS complex composed of at least BUD32, CGI121, GON7, KAE1 and PCC1; the whole complex dimerizes. A divalent metal cation is required as a cofactor.

Its subcellular location is the cytoplasm. The protein localises to the nucleus. The catalysed reaction is L-threonylcarbamoyladenylate + adenosine(37) in tRNA = N(6)-L-threonylcarbamoyladenosine(37) in tRNA + AMP + H(+). Component of the EKC/KEOPS complex that is required for the formation of a threonylcarbamoyl group on adenosine at position 37 (t(6)A37) in tRNAs that read codons beginning with adenine. The complex is probably involved in the transfer of the threonylcarbamoyl moiety of threonylcarbamoyl-AMP (TC-AMP) to the N6 group of A37. KAE1 likely plays a direct catalytic role in this reaction, but requires other protein(s) of the complex to fulfill this activity. The EKC/KEOPS complex also promotes both telomere uncapping and telomere elongation. The complex is required for efficient recruitment of transcriptional coactivators. In Saccharomyces cerevisiae (strain ATCC 204508 / S288c) (Baker's yeast), this protein is tRNA N6-adenosine threonylcarbamoyltransferase.